A 209-amino-acid chain; its full sequence is Uracil phosphoribosyltransferase (209 aa).

Residues Arg-79, Arg-104, and 131 to 139 (DPMLATGGS) contribute to the 5-phospho-alpha-D-ribose 1-diphosphate site. Uracil is bound by residues Ile-194 and 199-201 (GDA). Asp-200 provides a ligand contact to 5-phospho-alpha-D-ribose 1-diphosphate.

This sequence belongs to the UPRTase family. The cofactor is Mg(2+).

The enzyme catalyses UMP + diphosphate = 5-phospho-alpha-D-ribose 1-diphosphate + uracil. The protein operates within pyrimidine metabolism; UMP biosynthesis via salvage pathway; UMP from uracil: step 1/1. Its activity is regulated as follows. Allosterically activated by GTP. Catalyzes the conversion of uracil and 5-phospho-alpha-D-ribose 1-diphosphate (PRPP) to UMP and diphosphate. This Oceanobacillus iheyensis (strain DSM 14371 / CIP 107618 / JCM 11309 / KCTC 3954 / HTE831) protein is Uracil phosphoribosyltransferase.